The chain runs to 544 residues: Calcium-dependent protein kinase 6 (544 aa).

A disordered region spans residues 1–47 (MGNSCRGSFKDKIYEGNHSRPEENSKSTTTTVSSVHSPTTDQDFSKQ). G2 is lipidated: N-myristoyl glycine. Positions 8-25 (SFKDKIYEGNHSRPEENS) are enriched in basic and acidic residues. Residues 26–40 (KSTTTTVSSVHSPTT) are compositionally biased toward low complexity. One can recognise a Protein kinase domain in the interval 85 to 343 (YTLSRKLGQG…AHEVLRHPWI (259 aa)). ATP is bound by residues 91–99 (LGQGQFGTT) and K114. Residue D209 is the Proton acceptor of the active site. Residue S249 is modified to Phosphoserine. Residues 349–379 (APDRALDPAVLSRLKQFSAMNKLKKMALKVI) are autoinhibitory domain. 4 EF-hand domains span residues 386-421 (EEIA…YGST), 422-457 (LKDT…LNKL), 458-493 (EREE…HGMT), and 497-527 (LEDI…GNAG). Ca(2+)-binding residues include D399, D401, S403, E410, D435, D437, S439, T441, E446, D471, D473, S475, Y477, E482, D505, D507, D509, R511, and E516.

Belongs to the protein kinase superfamily. Ser/Thr protein kinase family. CDPK subfamily. In terms of assembly, interacts with SLAC1. Interacts with FD. Expressed in both guard cells and mesophyll cells. Expressed in the shoot apical meristem.

It localises to the cell membrane. The protein resides in the nucleus. It carries out the reaction L-seryl-[protein] + ATP = O-phospho-L-seryl-[protein] + ADP + H(+). The enzyme catalyses L-threonyl-[protein] + ATP = O-phospho-L-threonyl-[protein] + ADP + H(+). With respect to regulation, activated by calcium. Autophosphorylation may play an important role in the regulation of the kinase activity. Functionally, may play a role in signal transduction pathways that involve calcium as a second messenger. Functions in abscisic acid (ABA) regulation of guard cell S-type anion- and Ca(2+)-permeable channels and stomatal closure. Phosphorylates FD. This Arabidopsis thaliana (Mouse-ear cress) protein is Calcium-dependent protein kinase 6 (CPK6).